We begin with the raw amino-acid sequence, 373 residues long: Chorismate synthase (373 aa).

R46 serves as a coordination point for NADP(+). FMN contacts are provided by residues 123-125 (RSS), 251-252 (NA), G295, 310-314 (KPTPS), and R337.

This sequence belongs to the chorismate synthase family. Requires FMNH2 as cofactor.

The catalysed reaction is 5-O-(1-carboxyvinyl)-3-phosphoshikimate = chorismate + phosphate. It participates in metabolic intermediate biosynthesis; chorismate biosynthesis; chorismate from D-erythrose 4-phosphate and phosphoenolpyruvate: step 7/7. Catalyzes the anti-1,4-elimination of the C-3 phosphate and the C-6 proR hydrogen from 5-enolpyruvylshikimate-3-phosphate (EPSP) to yield chorismate, which is the branch point compound that serves as the starting substrate for the three terminal pathways of aromatic amino acid biosynthesis. This reaction introduces a second double bond into the aromatic ring system. The sequence is that of Chorismate synthase from Methanococcus maripaludis (strain DSM 14266 / JCM 13030 / NBRC 101832 / S2 / LL).